Here is a 316-residue protein sequence, read N- to C-terminus: Pleckstrin homology domain-containing family F member 1 homolog (316 aa).

Positions 35–131 (VLVGEGVLTK…WMAHINKCVE (97 aa)) constitute a PH domain. An FYVE-type zinc finger spans residues 152–212 (DTDASVCMHC…VCDACYERLK (61 aa)). Residues Cys-158, Cys-161, Cys-175, Cys-178, Cys-183, Cys-186, Cys-204, and Cys-207 each coordinate Zn(2+). The segment at 215–316 (PSSLGSGEDS…AAVATTGSHC (102 aa)) is disordered. The span at 244 to 253 (SNDEDSDEET) shows a compositional bias: acidic residues. Low complexity predominate over residues 279–292 (SSTITSPSSATTGS). Positions 298 to 316 (VTPSVQSSPAAVATTGSHC) are enriched in polar residues.

In terms of assembly, interacts with Gdi (Rab GDP dissociation inhibitor). In terms of tissue distribution, in ovaries, expressed both in the germ line cells and in the overlying somatic follicular epithelium.

Its subcellular location is the apical cell membrane. It is found in the endosome membrane. The protein resides in the cytoplasm. The protein localises to the cell cortex. In terms of biological role, functions in the regulation of endosome morphology and late endosome formation. Has a role in controlling trafficking from early to late endosomes and from late endosomes to lysosomes. Important for localization of Gdi to the endosomal membranes. May function in controlling the activity of multiple regulators in the endocytic pathway, perhaps by positively controlling those involved in the early steps of endocytosis such as Rab5 and hrs, and negative regulating those involved in the late stages of endocytosis like car and VhaSFD. This Drosophila melanogaster (Fruit fly) protein is Pleckstrin homology domain-containing family F member 1 homolog.